A 208-amino-acid chain; its full sequence is Uridine kinase (208 aa).

11–18 (GGTGSGKS) provides a ligand contact to ATP.

Belongs to the uridine kinase family.

It localises to the cytoplasm. The catalysed reaction is uridine + ATP = UMP + ADP + H(+). The enzyme catalyses cytidine + ATP = CMP + ADP + H(+). The protein operates within pyrimidine metabolism; CTP biosynthesis via salvage pathway; CTP from cytidine: step 1/3. Its pathway is pyrimidine metabolism; UMP biosynthesis via salvage pathway; UMP from uridine: step 1/1. This chain is Uridine kinase, found in Clostridium perfringens (strain ATCC 13124 / DSM 756 / JCM 1290 / NCIMB 6125 / NCTC 8237 / Type A).